Here is a 508-residue protein sequence, read N- to C-terminus: 6-phosphogluconate dehydrogenase, decarboxylating 2, chloroplastic (508 aa).

Residues 1-12 (MASPAPAPPAAS) constitute a chloroplast transit peptide. NADP(+)-binding positions include 28 to 33 (GLATMG), 51 to 53 (NRT), 95 to 97 (VQA), and N123. Substrate-binding positions include N123 and 149-151 (SGG). Catalysis depends on K203, which acts as the Proton acceptor. 206–207 (HN) is a binding site for substrate. E210 serves as the catalytic Proton donor. Substrate-binding residues include Y211, K284, R311, R475, and H481.

Belongs to the 6-phosphogluconate dehydrogenase family. In terms of assembly, homodimer.

It is found in the plastid. The protein resides in the chloroplast. The catalysed reaction is 6-phospho-D-gluconate + NADP(+) = D-ribulose 5-phosphate + CO2 + NADPH. Its pathway is carbohydrate degradation; pentose phosphate pathway; D-ribulose 5-phosphate from D-glucose 6-phosphate (oxidative stage): step 3/3. In terms of biological role, catalyzes the oxidative decarboxylation of 6-phosphogluconate to ribulose 5-phosphate and CO(2), with concomitant reduction of NADP to NADPH. The chain is 6-phosphogluconate dehydrogenase, decarboxylating 2, chloroplastic (G6PGH2) from Oryza sativa subsp. japonica (Rice).